Consider the following 668-residue polypeptide: Probable syringafactin export ATP-binding/permease protein SyfD (668 aa).

An ABC transporter domain is found at 22 to 260 (LRLQQVSRSF…APEAQPATPP (239 aa)). Residue 58-65 (GASGSGKS) participates in ATP binding. Residues 242–263 (RRTAQTTQPAPEAQPATPPGPA) form a disordered region. Over residues 245–256 (AQTTQPAPEAQP) the composition is skewed to low complexity. A run of 5 helical transmembrane segments spans residues 267–287 (LLASLGLFREAFNMAWIALIS), 293–313 (LLTMLGIIIGITSVVSISAIG), 541–561 (LTLLLSLIAVISLVVGGIGVM), 602–622 (MGGVIGIGLSYAIGYLFTLFV), and 631–651 (LASVVTAFACSTLIGVLFGFV).

Belongs to the ABC transporter superfamily. Macrolide exporter (TC 3.A.1.122) family. As to quaternary structure, probably part of a tripartite efflux system, which is composed of an inner membrane transporter, a periplasmic membrane fusion protein, and an outer membrane component.

The protein localises to the cell inner membrane. In terms of biological role, probably involved in the export of syringafactins. This Pseudomonas syringae pv. tomato (strain ATCC BAA-871 / DC3000) protein is Probable syringafactin export ATP-binding/permease protein SyfD.